We begin with the raw amino-acid sequence, 445 residues long: UPF0210 protein SPT_0285 (445 aa).

The protein belongs to the UPF0210 family. In terms of assembly, homodimer.

The protein is UPF0210 protein SPT_0285 of Streptococcus pneumoniae (strain Taiwan19F-14).